Reading from the N-terminus, the 407-residue chain is Phosphopentomutase (407 aa).

Residues aspartate 10, aspartate 306, histidine 311, aspartate 347, histidine 348, and histidine 359 each coordinate Mn(2+).

This sequence belongs to the phosphopentomutase family. The cofactor is Mn(2+).

The protein resides in the cytoplasm. It carries out the reaction 2-deoxy-alpha-D-ribose 1-phosphate = 2-deoxy-D-ribose 5-phosphate. It catalyses the reaction alpha-D-ribose 1-phosphate = D-ribose 5-phosphate. The protein operates within carbohydrate degradation; 2-deoxy-D-ribose 1-phosphate degradation; D-glyceraldehyde 3-phosphate and acetaldehyde from 2-deoxy-alpha-D-ribose 1-phosphate: step 1/2. Its function is as follows. Isomerase that catalyzes the conversion of deoxy-ribose 1-phosphate (dRib-1-P) and ribose 1-phosphate (Rib-1-P) to deoxy-ribose 5-phosphate (dRib-5-P) and ribose 5-phosphate (Rib-5-P), respectively. This is Phosphopentomutase from Yersinia enterocolitica serotype O:8 / biotype 1B (strain NCTC 13174 / 8081).